The sequence spans 205 residues: Dephospho-CoA kinase (205 aa).

A DPCK domain is found at 4-203; sequence KIGITGGIGS…QKIHYLCSAK (200 aa). 12-17 contacts ATP; the sequence is GSGKSV.

The protein belongs to the CoaE family.

The protein localises to the cytoplasm. It catalyses the reaction 3'-dephospho-CoA + ATP = ADP + CoA + H(+). Its pathway is cofactor biosynthesis; coenzyme A biosynthesis; CoA from (R)-pantothenate: step 5/5. Catalyzes the phosphorylation of the 3'-hydroxyl group of dephosphocoenzyme A to form coenzyme A. The polypeptide is Dephospho-CoA kinase (Bacteroides fragilis (strain ATCC 25285 / DSM 2151 / CCUG 4856 / JCM 11019 / LMG 10263 / NCTC 9343 / Onslow / VPI 2553 / EN-2)).